Reading from the N-terminus, the 122-residue chain is Acidic phospholipase A2 2 (122 aa).

7 disulfides stabilise this stretch: Cys-26/Cys-115, Cys-28/Cys-44, Cys-43/Cys-95, Cys-49/Cys-122, Cys-50/Cys-88, Cys-57/Cys-81, and Cys-75/Cys-86. Residues Tyr-27, Gly-29, and Gly-31 each coordinate Ca(2+). Residue His-47 is part of the active site. Ca(2+) is bound at residue Asp-48. The active site involves Asp-89.

It belongs to the phospholipase A2 family. Group II subfamily. D49 sub-subfamily. Requires Ca(2+) as cofactor. Expressed by the venom gland.

It localises to the secreted. The catalysed reaction is a 1,2-diacyl-sn-glycero-3-phosphocholine + H2O = a 1-acyl-sn-glycero-3-phosphocholine + a fatty acid + H(+). In terms of biological role, snake venom phospholipase A2 (PLA2) that has high lipolytic activity. PLA2 catalyzes the calcium-dependent hydrolysis of the 2-acyl groups in 3-sn-phosphoglycerides. This is Acidic phospholipase A2 2 from Craspedocephalus gramineus (Bamboo pit viper).